The primary structure comprises 777 residues: Acyl-CoA dehydrogenase family member 11 (777 aa).

Residues 501–511 (FCMTEPDVASS), 509–511 (ASS), 535–537 (WSS), and Ser-537 contribute to the FAD site. Residue Ser-511 participates in substrate binding. 626–629 (GPGR) serves as a coordination point for substrate. Residues Arg-654, Gln-724, and 724 to 728 (QVCGG) each bind FAD. Position 752 (Gly-752) interacts with substrate. FAD contacts are provided by residues 753–755 (PDE) and Glu-755.

Belongs to the acyl-CoA dehydrogenase family. Homodimer. FAD serves as cofactor.

It is found in the peroxisome. The protein resides in the mitochondrion membrane. The catalysed reaction is a 2,3-saturated acyl-CoA + oxidized [electron-transfer flavoprotein] + H(+) = a (2E)-enoyl-CoA + reduced [electron-transfer flavoprotein]. It carries out the reaction docosanoyl-CoA + oxidized [electron-transfer flavoprotein] + H(+) = (2E)-docosenoyl-CoA + reduced [electron-transfer flavoprotein]. It catalyses the reaction tetracosanoyl-CoA + oxidized [electron-transfer flavoprotein] + H(+) = (2E)-tetracosenoyl-CoA + reduced [electron-transfer flavoprotein]. The enzyme catalyses eicosanoyl-CoA + oxidized [electron-transfer flavoprotein] + H(+) = (2E)-eicosenoyl-CoA + reduced [electron-transfer flavoprotein]. The catalysed reaction is hexacosanoyl-CoA + oxidized [electron-transfer flavoprotein] + H(+) = (2E)-hexacosenoyl-CoA + reduced [electron-transfer flavoprotein]. It carries out the reaction tricosanoyl-CoA + oxidized [electron-transfer flavoprotein] + H(+) = (2E)-tricosenoyl-CoA + reduced [electron-transfer flavoprotein]. It participates in lipid metabolism; fatty acid beta-oxidation. In terms of biological role, acyl-CoA dehydrogenase, that exhibits maximal activity towards saturated C22-CoA. Probably participates in beta-oxydation and energy production but could also play a role in the metabolism of specific fatty acids to control fatty acids composition of cellular lipids in brain. This is Acyl-CoA dehydrogenase family member 11 (ACAD11) from Gallus gallus (Chicken).